The following is a 573-amino-acid chain: Splicing factor U2af large subunit B (573 aa).

A compositionally biased stretch (acidic residues) spans 1 to 12; that stretch reads MPDYEGNGEDID. A disordered region spans residues 1–187; the sequence is MPDYEGNGED…DMAPPTSAML (187 aa). Over residues 38–145 the composition is skewed to basic and acidic residues; sequence SDSKSQHSSR…QREHAKDRES (108 aa). Residues 161 to 173 are compositionally biased toward basic residues; it reads SRSRSRSRSKSKR. RRM domains lie at 239 to 322, 359 to 437, and 478 to 564; these read RRVY…RPSD, DRIF…RANQ, and EVIS…YPEN.

This sequence belongs to the splicing factor SR family. In terms of tissue distribution, expressed in stems, leaves and apical buds.

It localises to the nucleus. Functionally, necessary for the splicing of pre-mRNA. Binds to the U -enriched regions of plant introns. The polypeptide is Splicing factor U2af large subunit B (U2AF65B) (Nicotiana plumbaginifolia (Leadwort-leaved tobacco)).